The following is a 532-amino-acid chain: Putative cysteine ligase BshC (532 aa).

A coiled-coil region spans residues 431-451; sequence MAQAKDALAKVDASLVEAAER.

The protein belongs to the BshC family.

The chain is Putative cysteine ligase BshC from Koribacter versatilis (strain Ellin345).